Consider the following 682-residue polypeptide: Protein PilJ (682 aa).

At Met-1 to Arg-14 the chain is on the cytoplasmic side. Residues Ser-15–Ala-38 traverse the membrane as a helical segment. Residues Tyr-39–Arg-306 lie on the Periplasmic side of the membrane. A helical transmembrane segment spans residues Ser-307–Arg-333. At Glu-334–Ala-682 the chain is on the cytoplasmic side. In terms of domain architecture, HAMP spans Asp-347 to Glu-398. The region spanning Thr-403 to Gln-639 is the Methyl-accepting transducer domain.

The protein belongs to the methyl-accepting chemotaxis (MCP) protein family.

The protein localises to the cell inner membrane. In terms of biological role, may be a part of a signal-transduction system that regulates twitching motility by controlling pilus function (extension and retraction). This chain is Protein PilJ (pilJ), found in Pseudomonas aeruginosa (strain ATCC 15692 / DSM 22644 / CIP 104116 / JCM 14847 / LMG 12228 / 1C / PRS 101 / PAO1).